The sequence spans 245 residues: tRNA pseudouridine synthase A (245 aa).

D52 (nucleophile) is an active-site residue. Y111 is a substrate binding site.

This sequence belongs to the tRNA pseudouridine synthase TruA family. Homodimer.

It catalyses the reaction uridine(38/39/40) in tRNA = pseudouridine(38/39/40) in tRNA. Formation of pseudouridine at positions 38, 39 and 40 in the anticodon stem and loop of transfer RNAs. In Rickettsia prowazekii (strain Madrid E), this protein is tRNA pseudouridine synthase A.